Consider the following 263-residue polypeptide: Acyl-[acyl-carrier-protein]--UDP-N-acetylglucosamine O-acyltransferase (263 aa).

It belongs to the transferase hexapeptide repeat family. LpxA subfamily. As to quaternary structure, homotrimer.

The protein resides in the cytoplasm. The enzyme catalyses a (3R)-hydroxyacyl-[ACP] + UDP-N-acetyl-alpha-D-glucosamine = a UDP-3-O-[(3R)-3-hydroxyacyl]-N-acetyl-alpha-D-glucosamine + holo-[ACP]. Its pathway is glycolipid biosynthesis; lipid IV(A) biosynthesis; lipid IV(A) from (3R)-3-hydroxytetradecanoyl-[acyl-carrier-protein] and UDP-N-acetyl-alpha-D-glucosamine: step 1/6. Functionally, involved in the biosynthesis of lipid A, a phosphorylated glycolipid that anchors the lipopolysaccharide to the outer membrane of the cell. This chain is Acyl-[acyl-carrier-protein]--UDP-N-acetylglucosamine O-acyltransferase, found in Campylobacter jejuni subsp. doylei (strain ATCC BAA-1458 / RM4099 / 269.97).